The sequence spans 131 residues: Transcription antitermination protein NusB (131 aa).

The protein belongs to the NusB family.

Functionally, involved in transcription antitermination. Required for transcription of ribosomal RNA (rRNA) genes. Binds specifically to the boxA antiterminator sequence of the ribosomal RNA (rrn) operons. The protein is Transcription antitermination protein NusB of Bacillus pumilus (strain SAFR-032).